The chain runs to 398 residues: Alpha-2,8-sialyltransferase 8F (398 aa).

At 1-3 the chain is on the cytoplasmic side; sequence MRP. The helical; Signal-anchor for type II membrane protein transmembrane segment at 4–24 threads the bilayer; the sequence is GGALLALLASLLLLLLLRLLW. The Lumenal segment spans residues 25 to 398; sequence CPADAPGRAR…KLQFSKCEVA (374 aa). N-linked (GlcNAc...) asparagine glycans are attached at residues Asn-66, Asn-93, Asn-151, and Asn-196. Cystine bridges form between Cys-186–Cys-335 and Cys-200–Cys-395. Substrate contacts are provided by residues Asn-214, 236–238, and 322–324; these read NPS and STG. Residue His-370 is the Proton donor/acceptor of the active site.

Belongs to the glycosyltransferase 29 family.

The protein localises to the golgi apparatus membrane. The catalysed reaction is a ganglioside GM3 + CMP-N-acetyl-beta-neuraminate = a ganglioside GD3 + CMP + H(+). The enzyme catalyses a ganglioside GM3 (d18:1(4E)) + CMP-N-acetyl-beta-neuraminate = a ganglioside GD3 (d18:1(4E)) + CMP + H(+). It catalyses the reaction a ganglioside GD1a (d18:1(4E)) + CMP-N-acetyl-beta-neuraminate = a ganglioside GT1a (d18:1(4E)) + CMP + H(+). It carries out the reaction a ganglioside GD1a + CMP-N-acetyl-beta-neuraminate = a ganglioside GT1a + CMP + H(+). The catalysed reaction is a ganglioside GM1b (d18:1(4E)) + CMP-N-acetyl-beta-neuraminate = a ganglioside GD1c (d18:1(4E)) + CMP + H(+). The enzyme catalyses a ganglioside GM1b + CMP-N-acetyl-beta-neuraminate = a ganglioside GD1c + CMP + H(+). It catalyses the reaction a ganglioside GM4 (d18:1(4E)) + CMP-N-acetyl-beta-neuraminate = an N-acetyl-alpha-neuraminosyl-(2-&gt;8)-N-acetyl-alpha-neuraminosyl-(2-&gt;3)-beta-D-galactosyl-(1&lt;-&gt;1')-N-acylsphing-4-enine + CMP + H(+). It carries out the reaction N-acetyl-alpha-neuraminosyl-(2-&gt;3)-beta-D-galactosyl-(1&lt;-&gt;1')-ceramide + CMP-N-acetyl-beta-neuraminate = N-acetyl-alpha-neuraminosyl-(2-&gt;8)-N-acetyl-alpha-neuraminosyl-(2-&gt;3)-beta-D-galactosyl-(1&lt;-&gt;1')-ceramide + CMP + H(+). The catalysed reaction is a ganglioside GT1b (d18:1(4E)) + CMP-N-acetyl-beta-neuraminate = a ganglioside GQ1b (d18:1(4E)) + CMP + H(+). The enzyme catalyses a ganglioside GT1b + CMP-N-acetyl-beta-neuraminate = a ganglioside GQ1b + CMP + H(+). It participates in protein modification; protein glycosylation. Alpha-2,8-sialyltransferase that prefers O-glycans to N-glycans or glycolipids as acceptor substrates. The minimal acceptor substrate is the NeuAc-alpha-2,3(6)-Gal sequence at the non-reducing end of their carbohydrate groups. The chain is Alpha-2,8-sialyltransferase 8F from Homo sapiens (Human).